We begin with the raw amino-acid sequence, 475 residues long: Ribulose bisphosphate carboxylase large chain (475 aa).

The propeptide occupies 1-2 (MS). Position 3 is an N-acetylproline (proline 3). Lysine 14 is subject to N6,N6,N6-trimethyllysine. The substrate site is built by asparagine 123 and threonine 173. The active-site Proton acceptor is the lysine 175. Residue lysine 177 participates in substrate binding. Lysine 201, aspartate 203, and glutamate 204 together coordinate Mg(2+). Lysine 201 carries the post-translational modification N6-carboxylysine. The Proton acceptor role is filled by histidine 294. 3 residues coordinate substrate: arginine 295, histidine 327, and serine 379.

Belongs to the RuBisCO large chain family. Type I subfamily. Heterohexadecamer of 8 large chains and 8 small chains. Mg(2+) serves as cofactor.

The protein localises to the plastid. It carries out the reaction 2 (2R)-3-phosphoglycerate + 2 H(+) = D-ribulose 1,5-bisphosphate + CO2 + H2O. The catalysed reaction is D-ribulose 1,5-bisphosphate + O2 = 2-phosphoglycolate + (2R)-3-phosphoglycerate + 2 H(+). In terms of biological role, ruBisCO catalyzes two reactions: the carboxylation of D-ribulose 1,5-bisphosphate, the primary event in carbon dioxide fixation, as well as the oxidative fragmentation of the pentose substrate in the photorespiration process. Both reactions occur simultaneously and in competition at the same active site. The polypeptide is Ribulose bisphosphate carboxylase large chain (Aneura mirabilis (Parasitic liverwort)).